Here is a 141-residue protein sequence, read N- to C-terminus: Large ribosomal subunit protein bL17 (141 aa).

The protein belongs to the bacterial ribosomal protein bL17 family. Part of the 50S ribosomal subunit. Contacts protein L32.

In Allorhizobium ampelinum (strain ATCC BAA-846 / DSM 112012 / S4) (Agrobacterium vitis (strain S4)), this protein is Large ribosomal subunit protein bL17.